The chain runs to 129 residues: Small ribosomal subunit protein uS11 (129 aa).

Belongs to the universal ribosomal protein uS11 family. As to quaternary structure, part of the 30S ribosomal subunit. Interacts with proteins S7 and S18. Binds to IF-3.

Its function is as follows. Located on the platform of the 30S subunit, it bridges several disparate RNA helices of the 16S rRNA. Forms part of the Shine-Dalgarno cleft in the 70S ribosome. The polypeptide is Small ribosomal subunit protein uS11 (Francisella tularensis subsp. mediasiatica (strain FSC147)).